Here is a 287-residue protein sequence, read N- to C-terminus: Large ribosomal subunit protein uL2 (287 aa).

A disordered region spans residues 216-287 (RRPEVRGSVM…SKRGRGGRDA (72 aa)). Basic residues predominate over residues 271–287 (QRRRRKSSKRGRGGRDA).

This sequence belongs to the universal ribosomal protein uL2 family. As to quaternary structure, part of the 50S ribosomal subunit. Forms a bridge to the 30S subunit in the 70S ribosome.

Its function is as follows. One of the primary rRNA binding proteins. Required for association of the 30S and 50S subunits to form the 70S ribosome, for tRNA binding and peptide bond formation. It has been suggested to have peptidyltransferase activity; this is somewhat controversial. Makes several contacts with the 16S rRNA in the 70S ribosome. The chain is Large ribosomal subunit protein uL2 from Synechococcus sp. (strain ATCC 27144 / PCC 6301 / SAUG 1402/1) (Anacystis nidulans).